Consider the following 163-residue polypeptide: MSFKLNSLKDNAGSRVGRVRVGRGIGSGLGKTAGRGQKGQKSRSGVSINGFAGGQMPIYMRLPKRGFNNVFSKDYAEVNLGVVQKLIESGRLDAKNPIDHQALKAAGVARGGKDGVRILGKGEIASKVAFKVAGISKAAREAVEKAGGSVEIIARRNVEKTDA.

Residues 27 to 37 (SGLGKTAGRGQ) show a composition bias toward gly residues. A disordered region spans residues 27 to 46 (SGLGKTAGRGQKGQKSRSGV).

It belongs to the universal ribosomal protein uL15 family. Part of the 50S ribosomal subunit.

Its function is as follows. Binds to the 23S rRNA. This chain is Large ribosomal subunit protein uL15, found in Zymomonas mobilis subsp. mobilis (strain ATCC 31821 / ZM4 / CP4).